Reading from the N-terminus, the 393-residue chain is Probable acetyl-CoA acyltransferase (393 aa).

Cys88 (acyl-thioester intermediate) is an active-site residue. Active-site proton acceptor residues include His349 and Cys378.

Belongs to the thiolase-like superfamily. Thiolase family.

It localises to the cytoplasm. The catalysed reaction is 2 acetyl-CoA = acetoacetyl-CoA + CoA. The sequence is that of Probable acetyl-CoA acyltransferase from Staphylococcus aureus (strain Mu50 / ATCC 700699).